The following is a 260-amino-acid chain: Dehydrin ERD10 (260 aa).

Disordered stretches follow at residues 1–187 (MAEE…EEEK), 197–216 (KLPGHSKKPEDSQVVNTTPL), and 240–260 (KLPGYHAKTTGEEEKKEKVSD). Ala2 bears the N-acetylalanine mark. Residues 26 to 44 (EIKERGMFDFLKKKEEVKP) show a composition bias toward basic and acidic residues. The residue at position 61 (Ser61) is a Phosphoserine. 5 stretches are compositionally biased toward basic and acidic residues: residues 67–102 (VAKHEEEEHKPTLLEQLHQKHEEEEENKPSLLDKLH), 130–140 (IVEGDHVKTVE), 148–162 (DRIKEKFPLGEKPGG), 176–187 (SVEDHKPEEEEK), and 197–207 (KLPGHSKKPED). 2 consecutive repeat copies span residues 184-204 (EEEKKGFMDKIKEKLPGHSKK) and 227-247 (PEEKKGFMDKIKEKLPGYHAK). The 2 X 21 AA repeats, Lys-rich stretch occupies residues 184 to 247 (EEEKKGFMDK…KEKLPGYHAK (64 aa)).

It belongs to the plant dehydrin family. In terms of tissue distribution, in stems, cauline leaves, roots and flowers. Low levels found in maturing seeds. Absent in dry seeds.

The chain is Dehydrin ERD10 (ERD10) from Arabidopsis thaliana (Mouse-ear cress).